Reading from the N-terminus, the 530-residue chain is Probable phosphoacetylglucosamine mutase (530 aa).

Residue S62 is the Phosphoserine intermediate of the active site. Positions 62, 278, 280, and 282 each coordinate Mg(2+). Substrate-binding positions include 369–371 (EPN), 481–485 (RPSGT), and R490.

It belongs to the phosphohexose mutase family. Mg(2+) is required as a cofactor.

It catalyses the reaction N-acetyl-alpha-D-glucosamine 1-phosphate = N-acetyl-D-glucosamine 6-phosphate. It participates in nucleotide-sugar biosynthesis; UDP-N-acetyl-alpha-D-glucosamine biosynthesis; N-acetyl-alpha-D-glucosamine 1-phosphate from alpha-D-glucosamine 6-phosphate (route I): step 2/2. Catalyzes the conversion of GlcNAc-6-P into GlcNAc-1-P during the synthesis of uridine diphosphate/UDP-GlcNAc, which is a biosynthetic precursor of chitin and also supplies the amino sugars for N-linked oligosaccharides of glycoproteins. The chain is Probable phosphoacetylglucosamine mutase from Encephalitozoon cuniculi (strain GB-M1) (Microsporidian parasite).